The primary structure comprises 103 residues: U-scoloptoxin(24)-Er1a (103 aa).

A signal peptide spans 1–23 (MVKSLHCLIGIVLFLAILNAGNG).

The protein belongs to the scoloptoxin-24 family. In terms of processing, contains 1 disulfide bond. As to expression, expressed by the venom gland.

Its subcellular location is the secreted. The protein is U-scoloptoxin(24)-Er1a of Ethmostigmus rubripes (Giant centipede).